Consider the following 507-residue polypeptide: Phospho-2-dehydro-3-deoxyheptonate aldolase 2, chloroplastic (507 aa).

It belongs to the class-II DAHP synthase family.

The protein resides in the plastid. It localises to the chloroplast. The catalysed reaction is D-erythrose 4-phosphate + phosphoenolpyruvate + H2O = 7-phospho-2-dehydro-3-deoxy-D-arabino-heptonate + phosphate. It participates in metabolic intermediate biosynthesis; chorismate biosynthesis; chorismate from D-erythrose 4-phosphate and phosphoenolpyruvate: step 1/7. This is Phospho-2-dehydro-3-deoxyheptonate aldolase 2, chloroplastic (DHS2) from Arabidopsis thaliana (Mouse-ear cress).